Here is a 339-residue protein sequence, read N- to C-terminus: DNA-directed RNA polymerase subunit alpha (339 aa).

The alpha N-terminal domain (alpha-NTD) stretch occupies residues 1-235 (MVREEVAVST…DLFIPFLHGE (235 aa)). The alpha C-terminal domain (alpha-CTD) stretch occupies residues 267-339 (KAIALECIFI…FTIDLPKNKF (73 aa)).

It belongs to the RNA polymerase alpha chain family. As to quaternary structure, in plastids the minimal PEP RNA polymerase catalytic core is composed of four subunits: alpha, beta, beta', and beta''. When a (nuclear-encoded) sigma factor is associated with the core the holoenzyme is formed, which can initiate transcription.

Its subcellular location is the plastid. It is found in the chloroplast. It carries out the reaction RNA(n) + a ribonucleoside 5'-triphosphate = RNA(n+1) + diphosphate. Its function is as follows. DNA-dependent RNA polymerase catalyzes the transcription of DNA into RNA using the four ribonucleoside triphosphates as substrates. The polypeptide is DNA-directed RNA polymerase subunit alpha (Drimys granadensis).